The primary structure comprises 85 residues: Large ribosomal subunit protein bL27 (85 aa).

Residues 1–21 (MAHKKGQGSTQNNRDSAGRRL) form a disordered region.

This sequence belongs to the bacterial ribosomal protein bL27 family.

In Wolinella succinogenes (strain ATCC 29543 / DSM 1740 / CCUG 13145 / JCM 31913 / LMG 7466 / NCTC 11488 / FDC 602W) (Vibrio succinogenes), this protein is Large ribosomal subunit protein bL27.